Consider the following 284-residue polypeptide: Bifunctional protein FolD (284 aa).

Residues 163–165, serine 188, and isoleucine 229 each bind NADP(+); that span reads GRS.

This sequence belongs to the tetrahydrofolate dehydrogenase/cyclohydrolase family. Homodimer.

It carries out the reaction (6R)-5,10-methylene-5,6,7,8-tetrahydrofolate + NADP(+) = (6R)-5,10-methenyltetrahydrofolate + NADPH. It catalyses the reaction (6R)-5,10-methenyltetrahydrofolate + H2O = (6R)-10-formyltetrahydrofolate + H(+). It participates in one-carbon metabolism; tetrahydrofolate interconversion. In terms of biological role, catalyzes the oxidation of 5,10-methylenetetrahydrofolate to 5,10-methenyltetrahydrofolate and then the hydrolysis of 5,10-methenyltetrahydrofolate to 10-formyltetrahydrofolate. This is Bifunctional protein FolD from Campylobacter hominis (strain ATCC BAA-381 / DSM 21671 / CCUG 45161 / LMG 19568 / NCTC 13146 / CH001A).